The sequence spans 142 residues: Putative pre-16S rRNA nuclease (142 aa).

This sequence belongs to the YqgF nuclease family.

The protein resides in the cytoplasm. In terms of biological role, could be a nuclease involved in processing of the 5'-end of pre-16S rRNA. In Staphylococcus epidermidis (strain ATCC 35984 / DSM 28319 / BCRC 17069 / CCUG 31568 / BM 3577 / RP62A), this protein is Putative pre-16S rRNA nuclease.